We begin with the raw amino-acid sequence, 416 residues long: MAAPTRSLRRLSSFRTTISPSLTVTAPIGCRSYATTDSSSATNTPGTTRRRATKFQDKLNAGPSFSDFVSGGQDEPLDPSEAYALKTALVGPAGRKKEMTRLPEWLKTPIPDSKNYQRLKKDLRGLNLHTVCEEARCPNISDCWGGSDKSSATATIMLMGDTCTRGCRFCSVKTSRAPPPLDPHEPENTAEAISRWSLGYVVLTSVDRDDLVDGGARHFAETVIKIKQKKPSMLVECLTGDFRGDTEMAALVARSGLDVYAHNVETVEELTPFVRDRRATFQQSIRVLDSAKKAVPELVTKTSLMLGLGETDEQLWDALRQLRAVNVDVVTFGQYMRPTKRHMAVHEYVTPDRFELWRQRALDMGFLYCASGPLVRSSYKAGEAFIENVLKKRRAGSGTAERTVDQTAATTDEATR.

A mitochondrion-targeting transit peptide spans 1 to 33 (MAAPTRSLRRLSSFRTTISPSLTVTAPIGCRSY). Residues Cys-132, Cys-137, Cys-143, Cys-163, Cys-167, Cys-170, and Ser-378 each coordinate [4Fe-4S] cluster. In terms of domain architecture, Radical SAM core spans 148-367 (DKSSATATIM…RQRALDMGFL (220 aa)). The tract at residues 396 to 416 (GSGTAERTVDQTAATTDEATR) is disordered. The segment covering 405-416 (DQTAATTDEATR) has biased composition (polar residues).

This sequence belongs to the radical SAM superfamily. Lipoyl synthase family. [4Fe-4S] cluster is required as a cofactor.

It localises to the mitochondrion. It carries out the reaction [[Fe-S] cluster scaffold protein carrying a second [4Fe-4S](2+) cluster] + N(6)-octanoyl-L-lysyl-[protein] + 2 oxidized [2Fe-2S]-[ferredoxin] + 2 S-adenosyl-L-methionine + 4 H(+) = [[Fe-S] cluster scaffold protein] + N(6)-[(R)-dihydrolipoyl]-L-lysyl-[protein] + 4 Fe(3+) + 2 hydrogen sulfide + 2 5'-deoxyadenosine + 2 L-methionine + 2 reduced [2Fe-2S]-[ferredoxin]. It functions in the pathway protein modification; protein lipoylation via endogenous pathway; protein N(6)-(lipoyl)lysine from octanoyl-[acyl-carrier-protein]: step 2/2. Its function is as follows. Catalyzes the radical-mediated insertion of two sulfur atoms into the C-6 and C-8 positions of the octanoyl moiety bound to the lipoyl domains of lipoate-dependent enzymes, thereby converting the octanoylated domains into lipoylated derivatives. In Penicillium rubens (strain ATCC 28089 / DSM 1075 / NRRL 1951 / Wisconsin 54-1255) (Penicillium chrysogenum), this protein is Lipoyl synthase, mitochondrial.